The chain runs to 556 residues: DNA ligase B (556 aa).

Catalysis depends on K122, which acts as the N6-AMP-lysine intermediate.

The protein belongs to the NAD-dependent DNA ligase family. LigB subfamily.

The catalysed reaction is NAD(+) + (deoxyribonucleotide)n-3'-hydroxyl + 5'-phospho-(deoxyribonucleotide)m = (deoxyribonucleotide)n+m + AMP + beta-nicotinamide D-nucleotide.. In terms of biological role, catalyzes the formation of phosphodiester linkages between 5'-phosphoryl and 3'-hydroxyl groups in double-stranded DNA using NAD as a coenzyme and as the energy source for the reaction. The polypeptide is DNA ligase B (Enterobacter sp. (strain 638)).